Consider the following 84-residue polypeptide: Sulfur carrier protein TusA (84 aa).

Residue cysteine 19 is the Cysteine persulfide intermediate of the active site.

This sequence belongs to the sulfur carrier protein TusA family. Interacts with IscS.

The protein resides in the cytoplasm. The protein operates within tRNA modification. Sulfur carrier protein involved in sulfur trafficking in the cell. Part of a sulfur-relay system required for 2-thiolation during synthesis of 2-thiouridine of the modified wobble base 5-methylaminomethyl-2-thiouridine (mnm(5)s(2)U) in tRNA. Interacts with IscS and stimulates its cysteine desulfurase activity. Accepts an activated sulfur from IscS, which is then transferred to TusD, and thus determines the direction of sulfur flow from IscS to 2-thiouridine formation. Also appears to be involved in sulfur transfer for the biosynthesis of molybdopterin. The protein is Sulfur carrier protein TusA of Yersinia pseudotuberculosis serotype O:1b (strain IP 31758).